Reading from the N-terminus, the 512-residue chain is GMP synthase [glutamine-hydrolyzing] (512 aa).

A Glutamine amidotransferase type-1 domain is found at 6-195 (KIIILDFGSQ…VFNICGCQPK (190 aa)). Catalysis depends on Cys83, which acts as the Nucleophile. Catalysis depends on residues His169 and Glu171. Residues 196 to 387 (WKITEFISAA…LGIDFKFVYK (192 aa)) enclose the GMPS ATP-PPase domain. 223–229 (SGGVDSS) lines the ATP pocket.

As to quaternary structure, homodimer.

The catalysed reaction is XMP + L-glutamine + ATP + H2O = GMP + L-glutamate + AMP + diphosphate + 2 H(+). It participates in purine metabolism; GMP biosynthesis; GMP from XMP (L-Gln route): step 1/1. Functionally, catalyzes the synthesis of GMP from XMP. In Spiroplasma kunkelii, this protein is GMP synthase [glutamine-hydrolyzing].